The chain runs to 179 residues: Peptidyl-tRNA hydrolase (179 aa).

Tyrosine 15 contacts tRNA. The Proton acceptor role is filled by histidine 20. TRNA-binding residues include tyrosine 66, asparagine 68, and asparagine 114.

The protein belongs to the PTH family. In terms of assembly, monomer.

The protein localises to the cytoplasm. The enzyme catalyses an N-acyl-L-alpha-aminoacyl-tRNA + H2O = an N-acyl-L-amino acid + a tRNA + H(+). In terms of biological role, hydrolyzes ribosome-free peptidyl-tRNAs (with 1 or more amino acids incorporated), which drop off the ribosome during protein synthesis, or as a result of ribosome stalling. Functionally, catalyzes the release of premature peptidyl moieties from peptidyl-tRNA molecules trapped in stalled 50S ribosomal subunits, and thus maintains levels of free tRNAs and 50S ribosomes. This is Peptidyl-tRNA hydrolase from Chlamydia trachomatis serovar L2 (strain ATCC VR-902B / DSM 19102 / 434/Bu).